A 209-amino-acid chain; its full sequence is Small ribosomal subunit protein uS3 (209 aa).

A KH type-2 domain is found at isoleucine 38–lysine 107.

The protein belongs to the universal ribosomal protein uS3 family. Part of the 30S ribosomal subunit. Forms a tight complex with proteins S10 and S14.

Binds the lower part of the 30S subunit head. Binds mRNA in the 70S ribosome, positioning it for translation. The sequence is that of Small ribosomal subunit protein uS3 from Thermotoga petrophila (strain ATCC BAA-488 / DSM 13995 / JCM 10881 / RKU-1).